We begin with the raw amino-acid sequence, 489 residues long: Serine/threonine-protein kinase BSK2 (489 aa).

A disordered region spans residues 1–30 (MGCLHSKTANLPSSDDPSAPNKPESVNGDQ). Gly2 carries N-myristoyl glycine lipidation. Residues 7-16 (KTANLPSSDD) show a composition bias toward polar residues. A Protein kinase domain is found at 56–322 (SCIVSEGGEK…QEEVASHVLM (267 aa)). Residues 62 to 70 (GGEKAPNVV) and Lys84 contribute to the ATP site. Asp178 serves as the catalytic Proton acceptor.

The protein belongs to the protein kinase superfamily. Ser/Thr protein kinase family. Post-translationally, phosphorylated by BRI1 upon brassinolide (BL) treatment.

It localises to the cell membrane. It carries out the reaction L-seryl-[protein] + ATP = O-phospho-L-seryl-[protein] + ADP + H(+). The catalysed reaction is L-threonyl-[protein] + ATP = O-phospho-L-threonyl-[protein] + ADP + H(+). Probable serine/threonine kinase that acts as a positive regulator of brassinosteroid (BR) signaling downstream of the receptor kinase BRI1. Mediates signal transduction from BRI1 by functioning as substrate of BRI1. In Arabidopsis thaliana (Mouse-ear cress), this protein is Serine/threonine-protein kinase BSK2.